Here is a 144-residue protein sequence, read N- to C-terminus: Large ribosomal subunit protein uL15 (144 aa).

Residues methionine 1–proline 56 are disordered. Residues arginine 21–alanine 31 show a composition bias toward gly residues.

This sequence belongs to the universal ribosomal protein uL15 family. In terms of assembly, part of the 50S ribosomal subunit.

Binds to the 23S rRNA. The polypeptide is Large ribosomal subunit protein uL15 (Burkholderia multivorans (strain ATCC 17616 / 249)).